An 819-amino-acid chain; its full sequence is Regulator of G-protein signaling rgs-7 (819 aa).

Over residues 1–11 the composition is skewed to acidic residues; sequence MSDEDADEYDD. 3 disordered regions span residues 1 to 51, 112 to 135, and 149 to 259; these read MSDE…EMLW, GDDS…GYGS, and SSTY…HNNE. Over residues 32 to 44 the composition is skewed to polar residues; it reads YQDTTESTGPSEA. Positions 112–124 are enriched in basic and acidic residues; it reads GDDSSFRSRDRFV. The segment covering 149 to 166 has biased composition (low complexity); the sequence is SSTYSSSSEAHRLSSLRA. Residues 173-185 show a composition bias toward polar residues; it reads QLTSTTTSFQPLS. Basic residues predominate over residues 213–223; the sequence is RMYRKNPKYRR. Residues 234-259 show a composition bias toward basic and acidic residues; it reads SRLEESTSQESERAVTPESWMEHNNE. Residues 290 to 429 form the C2 domain; sequence KHKDIRGIIF…KASQVVGDPF (140 aa). Disordered regions lie at residues 515 to 594 and 617 to 640; these read YRST…DDNG and FTFS…EEDK. 3 stretches are compositionally biased toward polar residues: residues 517–533, 559–568, and 617–632; these read STGS…NLLD, PSITTTTSEN, and FTFS…NLRQ. Residues 682-800 form the RGS domain; sequence SFESLLNNKF…LRDRLFLDLL (119 aa).

Interacts with egl-30.

Functionally, inhibits signal transduction by increasing the GTPase activity of G protein alpha subunit egl-30 (G-alpha(q)), thereby driving it into its inactive GDP-bound form. May organize egl-30 into a stable multiprotein signaling complex, and thereby persistently inhibit egl-30 when triggered by calcium or phospholipids. This Caenorhabditis elegans protein is Regulator of G-protein signaling rgs-7 (rgs-7).